The following is a 663-amino-acid chain: MNFRYNQTPFGYQRRKTREVKVGDVKVGGNNPIVIQSMINSDTTDTQGSVKQILELERAGCEIVRLTVPSQADADNLPSIRQELKKAGSKVPLVADIHFTPSVAMKAVEYVEKVRINPGNFADKKKFAVRDYTDLKYNQELERISEVFSPLVLRCKELGVSMRIGTNHGSLSDRIMNRYGDTPQGMVESALEFIRIAESLGYYDIIVSMKASNPQVMVQAYRMLASRFNELKMDYPLHLGVTEAGDGNDGRIKSAIGIGSLLEDGLGDTIRVSLTEDPVLEVPVAKLLADKFNKKISNLNSVKGYSEFRNPFSYNRFYSSEIKIVQFEAGENHPVRVETILPFENSNSFLENVAKLYQYGKSLSIEPESILVDSPLPDQLKEISEAATALSIPVGILLSKNVSLNEKLQKELLSFPKIVFDPFLQFQDGEKMLSFLKERQNAGLFSEIHTSGDKLDSLRGLPDTLSEIGIKNVLFSLDSKEILYDYRKLGSILSRFEFPILLHGSFSNPEEALYNSAIGIGGLLIDGIGDLIRISTSKIKDIEEIFQLSYDLLQGTRLRLTKTEYISCPSCGRTLFDLQETTARIKSRTGHLKGVKIAVMGCIVNGPGEMADADFGYVGAGPGKVHLYRGKEIVLKNVPSEIADEKLVQLIKDNELWQDPSND.

Residues Cys-568, Cys-571, Cys-602, and Glu-609 each coordinate [4Fe-4S] cluster.

The protein belongs to the IspG family. [4Fe-4S] cluster is required as a cofactor.

It carries out the reaction (2E)-4-hydroxy-3-methylbut-2-enyl diphosphate + oxidized [flavodoxin] + H2O + 2 H(+) = 2-C-methyl-D-erythritol 2,4-cyclic diphosphate + reduced [flavodoxin]. It participates in isoprenoid biosynthesis; isopentenyl diphosphate biosynthesis via DXP pathway; isopentenyl diphosphate from 1-deoxy-D-xylulose 5-phosphate: step 5/6. Its function is as follows. Converts 2C-methyl-D-erythritol 2,4-cyclodiphosphate (ME-2,4cPP) into 1-hydroxy-2-methyl-2-(E)-butenyl 4-diphosphate. The polypeptide is 4-hydroxy-3-methylbut-2-en-1-yl diphosphate synthase (flavodoxin) (Leptospira interrogans serogroup Icterohaemorrhagiae serovar copenhageni (strain Fiocruz L1-130)).